Reading from the N-terminus, the 134-residue chain is MSWQTYVDDHLMCDIEGHEGHRLTAAAIVGHDGSVWAQSATFPQFKPEEMNGIMTDFNEPGHLAPTGLHLGGTKYMVIQGEAGAVIRGKKGSGGITIKKTGQALVFGIYEEPVTPGQCNMVVEGLGDYLLEQGL.

Cys-13 and Cys-118 are oxidised to a cystine. Positions 84-100 (AVIRGKKGSGGITIKKT) match the Involved in PIP2 interaction motif. The residue at position 114 (Thr-114) is a Phosphothreonine.

This sequence belongs to the profilin family. Occurs in many kinds of cells as a complex with monomeric actin in a 1:1 ratio. Phosphorylated by MAP kinases.

Its subcellular location is the cytoplasm. The protein localises to the cytoskeleton. In terms of biological role, binds to actin and affects the structure of the cytoskeleton. At high concentrations, profilin prevents the polymerization of actin, whereas it enhances it at low concentrations. This chain is Profilin-2, found in Olea europaea (Common olive).